Consider the following 423-residue polypeptide: Maltooligosaccharide ABC transporter solute-binding lipoprotein (423 aa).

The signal sequence occupies residues Met1–Ala24. Cys25 carries N-palmitoyl cysteine lipidation. Cys25 is lipidated: S-diacylglycerol cysteine. Substrate is bound by residues Tyr52, Asp77, Asp83, Asp103 to Arg104, Glu148, Asp193, Asn196, Glu251 to Gly254, Trp274, and Lys307.

This sequence belongs to the bacterial solute-binding protein 1 family.

It is found in the cell membrane. Functionally, part of an ABC transporter complex involved in the uptake of maltodextrins. Binds glycogen-derived linear maltooligosaccharides increasing in size from maltotriose to maltooctaose with the highest affinity for maltotriose. Has a very weak affinity for maltose. Has also a very low affinity for maltotetraitol, indicating that the binding is selective for maltooligosaccharides with an intact reducing end. The sequence is that of Maltooligosaccharide ABC transporter solute-binding lipoprotein (malX) from Streptococcus pneumoniae (strain ATCC BAA-255 / R6).